The following is a 291-amino-acid chain: Porphobilinogen deaminase (291 aa).

Cys237 carries the post-translational modification S-(dipyrrolylmethanemethyl)cysteine.

The protein belongs to the HMBS family. In terms of assembly, monomer. Dipyrromethane serves as cofactor.

The catalysed reaction is 4 porphobilinogen + H2O = hydroxymethylbilane + 4 NH4(+). The protein operates within porphyrin-containing compound metabolism; protoporphyrin-IX biosynthesis; coproporphyrinogen-III from 5-aminolevulinate: step 2/4. In terms of biological role, tetrapolymerization of the monopyrrole PBG into the hydroxymethylbilane pre-uroporphyrinogen in several discrete steps. The protein is Porphobilinogen deaminase of Clostridium perfringens (strain 13 / Type A).